Consider the following 113-residue polypeptide: Biotrophy-associated secreted protein 3 (113 aa).

The first 20 residues, 1-20 (MQFSTVSFAIFAILPAMVAA), serve as a signal peptide directing secretion.

The protein resides in the secreted. Functionally, secreted effector involved in biotrophic colonization of plant cells. The chain is Biotrophy-associated secreted protein 3 from Pyricularia oryzae (strain 70-15 / ATCC MYA-4617 / FGSC 8958) (Rice blast fungus).